The sequence spans 216 residues: Somatotropin (216 aa).

Residues 1 to 25 (MAPGSWFSPLFITVITLGLQWPQEA) form the signal peptide. H46 serves as a coordination point for Zn(2+). Residues C78 and C189 are joined by a disulfide bond. E198 is a binding site for Zn(2+). C206 and C214 are joined by a disulfide.

Belongs to the somatotropin/prolactin family.

The protein resides in the secreted. In terms of biological role, growth hormone plays an important role in growth control. In Anas platyrhynchos (Mallard), this protein is Somatotropin (GH).